The primary structure comprises 68 residues: Putative transcript Y 10 protein (68 aa).

This Homo sapiens (Human) protein is Putative transcript Y 10 protein (TTTY10).